We begin with the raw amino-acid sequence, 167 residues long: NAD(P)H-quinone oxidoreductase subunit I, chloroplastic (167 aa).

2 4Fe-4S ferredoxin-type domains span residues 55–84 (GRIHFEFDKCIACEVCVRVCPIDLPVVDWK) and 95–124 (LNYSIDFGICIFCGNCVEYCPTNCLSMTEE). The [4Fe-4S] cluster site is built by Cys-64, Cys-67, Cys-70, Cys-74, Cys-104, Cys-107, Cys-110, and Cys-114.

The protein belongs to the complex I 23 kDa subunit family. As to quaternary structure, NDH is composed of at least 16 different subunits, 5 of which are encoded in the nucleus. The cofactor is [4Fe-4S] cluster.

Its subcellular location is the plastid. It is found in the chloroplast thylakoid membrane. It catalyses the reaction a plastoquinone + NADH + (n+1) H(+)(in) = a plastoquinol + NAD(+) + n H(+)(out). It carries out the reaction a plastoquinone + NADPH + (n+1) H(+)(in) = a plastoquinol + NADP(+) + n H(+)(out). Its function is as follows. NDH shuttles electrons from NAD(P)H:plastoquinone, via FMN and iron-sulfur (Fe-S) centers, to quinones in the photosynthetic chain and possibly in a chloroplast respiratory chain. The immediate electron acceptor for the enzyme in this species is believed to be plastoquinone. Couples the redox reaction to proton translocation, and thus conserves the redox energy in a proton gradient. In Vitis vinifera (Grape), this protein is NAD(P)H-quinone oxidoreductase subunit I, chloroplastic.